Here is a 4061-residue protein sequence, read N- to C-terminus: Hybrid PKS-NRPS synthetase tasS (4061 aa).

Residues 7-472 (QEPIAVIGMA…GTNAHAIIEG (466 aa)) enclose the Ketosynthase family 3 (KS3) domain. C180 is an active-site residue. The malonyl-CoA:ACP transacylase (MAT) domain stretch occupies residues 586 to 911 (VFTGQGAQWP…RQKNDVEELL (326 aa)). An N-terminal hotdog fold region spans residues 977-1113 (HPLLGRRCVE…ATVNVTFHEP (137 aa)). A dehydratase (DH) domain region spans residues 977–1280 (HPLLGRRCVE…VRVQPFSVAG (304 aa)). Residues 977 to 1282 (HPLLGRRCVE…VQPFSVAGPQ (306 aa)) form the PKS/mFAS DH domain. The active-site Proton acceptor; for dehydratase activity is H1010. Residues 1128 to 1282 (LANAEPQRLY…VQPFSVAGPQ (155 aa)) are C-terminal hotdog fold. The Proton donor; for dehydratase activity role is filled by D1188. The methyltransferase (MT) domain stretch occupies residues 1425 to 1619 (LDRFYEEGFE…GFNGVETHTP (195 aa)). The segment at 2153 to 2325 (TYFLLGLSGE…GVVGSDMAIG (173 aa)) is ketoreductase (KR) domain. The region spanning 2437-2516 (EAIKVVFDTF…LLVEEAVDKL (80 aa)) is the Carrier 1 domain. S2475 carries the post-translational modification O-(pantetheine 4'-phosphoryl)serine. Residues 2527–2617 (EHGGEPDLTQ…QKHQEQTSQS (91 aa)) are disordered. Positions 2556-2576 (TSAASSSDTGSDSSPTSNSVS) are enriched in low complexity. The span at 2577-2592 (ETQTGTPLETPMSTTE) shows a compositional bias: polar residues. The interval 2632-3077 (QMTFGQNRFW…ELATWDTESE (446 aa)) is condensation (C) domain. Residues 3103-3510 (QVIADHPDAV…RGYLTVEGRI (408 aa)) are adenylation (A) (KR) domain. A Carrier 2 domain is found at 3633 to 3712 (QNLTATERTL…SMAALLDDGV (80 aa)). Residue S3672 is modified to O-(pantetheine 4'-phosphoryl)serine. The tract at residues 3813–3969 (DIDVVLHCAA…LSPLEDAVEA (157 aa)) is reductase (RED) domain.

The protein in the C-terminal section; belongs to the NRP synthetase family.

It carries out the reaction (2S,4S)-4-hydroxy-4-methylglutamate + 8 malonyl-CoA + 3 S-adenosyl-L-methionine + ATP + 8 NADPH + 11 H(+) = (2S)-3-[(2S)-3,5-dioxo-4-[(2E,4R,6R,8E,10E,12E)-4,6,12-trimethyltetradeca-2,8,10,12-tetraenoyl]pyrrolidin-2-yl]-2-hydroxy-2-methylpropanoate + AMP + 3 S-adenosyl-L-homocysteine + 8 CO2 + diphosphate + 8 NADP(+) + 8 CoA + 6 H2O. The protein operates within secondary metabolite biosynthesis. Its function is as follows. Hybrid PKS-NRPS synthetase; part of the gene cluster that mediates the biosynthesis of the tetramic acids Sch210971 and Sch210972, potential anti-HIV fungal natural product that contain a decalin core. The PKS module of tasS together with the enoylreductase tasC catalyze the formation of the polyketide unit which is then conjugated to 4-hydroxyl-4-methyl glutamate (HMG) by the condensation domain of the tasS NRPS module. One unique structural feature of Sch210971 and Sch210972 is the tetramic acid motif proposed to be derived from the non-proteinogenic amino acid HMG, by a Dieckmann-type condensation catalyzed by the reductase domain of tasS. The aldolase tasA catalyzes the aldol condensation of 2 molecules of pyruvic acid to yield the intermediate 4-hydroxyl-4-methyl-2-oxoglutarate (HMOG), which can then be stereoselectively transaminated, may be by tasG, to form HMG. The Diels-Alderase tas3 then uses the Dieckmann product of tasS as substrate and catalyzes the Diels-Alder cycloaddition to form the decalin ring of Sch210971 and Sch210972. This is Hybrid PKS-NRPS synthetase tasS from Hapsidospora irregularis.